Here is a 173-residue protein sequence, read N- to C-terminus: 6,7-dimethyl-8-ribityllumazine synthase (173 aa).

Residues phenylalanine 24, 58–60 (ALE), and 82–84 (AVI) contribute to the 5-amino-6-(D-ribitylamino)uracil site. Position 87 to 88 (87 to 88 (ET)) interacts with (2S)-2-hydroxy-3-oxobutyl phosphate. Histidine 90 (proton donor) is an active-site residue. Asparagine 115 provides a ligand contact to 5-amino-6-(D-ribitylamino)uracil. Residue arginine 129 coordinates (2S)-2-hydroxy-3-oxobutyl phosphate. The interval 150-173 (TLDQLSDDEEDEEDEDDEDEEERA) is disordered. The span at 154-173 (LSDDEEDEEDEDDEDEEERA) shows a compositional bias: acidic residues.

The protein belongs to the DMRL synthase family.

The catalysed reaction is (2S)-2-hydroxy-3-oxobutyl phosphate + 5-amino-6-(D-ribitylamino)uracil = 6,7-dimethyl-8-(1-D-ribityl)lumazine + phosphate + 2 H2O + H(+). The protein operates within cofactor biosynthesis; riboflavin biosynthesis; riboflavin from 2-hydroxy-3-oxobutyl phosphate and 5-amino-6-(D-ribitylamino)uracil: step 1/2. Functionally, catalyzes the formation of 6,7-dimethyl-8-ribityllumazine by condensation of 5-amino-6-(D-ribitylamino)uracil with 3,4-dihydroxy-2-butanone 4-phosphate. This is the penultimate step in the biosynthesis of riboflavin. The sequence is that of 6,7-dimethyl-8-ribityllumazine synthase from Burkholderia mallei (strain NCTC 10247).